Consider the following 235-residue polypeptide: Adapter protein MecA (235 aa).

A compositionally biased stretch (basic and acidic residues) spans 113 to 135 (LRQSDKGDIVKSKVSSSDHKDGS). Positions 113–136 (LRQSDKGDIVKSKVSSSDHKDGSQ) are disordered.

The protein belongs to the MecA family. Homodimer.

Functionally, enables the recognition and targeting of unfolded and aggregated proteins to the ClpC protease or to other proteins involved in proteolysis. This chain is Adapter protein MecA, found in Leuconostoc mesenteroides subsp. mesenteroides (strain ATCC 8293 / DSM 20343 / BCRC 11652 / CCM 1803 / JCM 6124 / NCDO 523 / NBRC 100496 / NCIMB 8023 / NCTC 12954 / NRRL B-1118 / 37Y).